The chain runs to 299 residues: ATP phosphoribosyltransferase (299 aa).

The protein belongs to the ATP phosphoribosyltransferase family. Long subfamily. As to quaternary structure, equilibrium between an active dimeric form, an inactive hexameric form and higher aggregates. Interconversion between the various forms is largely reversible and is influenced by the natural substrates and inhibitors of the enzyme. Mg(2+) serves as cofactor.

Its subcellular location is the cytoplasm. It carries out the reaction 1-(5-phospho-beta-D-ribosyl)-ATP + diphosphate = 5-phospho-alpha-D-ribose 1-diphosphate + ATP. It functions in the pathway amino-acid biosynthesis; L-histidine biosynthesis; L-histidine from 5-phospho-alpha-D-ribose 1-diphosphate: step 1/9. With respect to regulation, feedback inhibited by histidine. Functionally, catalyzes the condensation of ATP and 5-phosphoribose 1-diphosphate to form N'-(5'-phosphoribosyl)-ATP (PR-ATP). Has a crucial role in the pathway because the rate of histidine biosynthesis seems to be controlled primarily by regulation of HisG enzymatic activity. This is ATP phosphoribosyltransferase from Escherichia coli O157:H7.